We begin with the raw amino-acid sequence, 129 residues long: Phosphoribosyl-AMP cyclohydrolase (129 aa).

D94 lines the Mg(2+) pocket. C95 contacts Zn(2+). The Mg(2+) site is built by D96 and D98. Zn(2+) contacts are provided by C111 and C118.

It belongs to the PRA-CH family. In terms of assembly, homodimer. Mg(2+) is required as a cofactor. Requires Zn(2+) as cofactor.

Its subcellular location is the cytoplasm. The enzyme catalyses 1-(5-phospho-beta-D-ribosyl)-5'-AMP + H2O = 1-(5-phospho-beta-D-ribosyl)-5-[(5-phospho-beta-D-ribosylamino)methylideneamino]imidazole-4-carboxamide. It functions in the pathway amino-acid biosynthesis; L-histidine biosynthesis; L-histidine from 5-phospho-alpha-D-ribose 1-diphosphate: step 3/9. Catalyzes the hydrolysis of the adenine ring of phosphoribosyl-AMP. The polypeptide is Phosphoribosyl-AMP cyclohydrolase (Corynebacterium efficiens (strain DSM 44549 / YS-314 / AJ 12310 / JCM 11189 / NBRC 100395)).